A 75-amino-acid chain; its full sequence is ATP synthase subunit 9, mitochondrial (75 aa).

2 helical membrane passes run 10-30 (LVLG…GILF) and 55-75 (FALV…VYFI).

The protein belongs to the ATPase C chain family. As to quaternary structure, F-type ATPases have 2 components, CF(1) - the catalytic core - and CF(0) - the membrane proton channel. CF(1) has five subunits: alpha(3), beta(3), gamma(1), delta(1), epsilon(1). CF(0) has three main subunits: a, b and c.

Its subcellular location is the mitochondrion membrane. In terms of biological role, mitochondrial membrane ATP synthase (F(1)F(0) ATP synthase or Complex V) produces ATP from ADP in the presence of a proton gradient across the membrane which is generated by electron transport complexes of the respiratory chain. F-type ATPases consist of two structural domains, F(1) - containing the extramembraneous catalytic core and F(0) - containing the membrane proton channel, linked together by a central stalk and a peripheral stalk. During catalysis, ATP synthesis in the catalytic domain of F(1) is coupled via a rotary mechanism of the central stalk subunits to proton translocation. Part of the complex F(0) domain. A homomeric c-ring of probably 10 subunits is part of the complex rotary element. In Paramecium tetraurelia, this protein is ATP synthase subunit 9, mitochondrial (ATP9).